The following is a 774-amino-acid chain: Mastermind-like domain-containing protein 1 (774 aa).

Disordered regions lie at residues 257–279 (STGI…SSMA), 310–365 (LAAS…PQSL), 386–421 (ALLS…QPQF), 442–473 (HLMS…QQSF), 525–609 (GMAS…QPDH), 656–678 (PQHQ…VSPS), and 755–774 (LPSC…GNDP). Residues 331–361 (LPPPGLSPPYRPVPSPHPPPLPLPPPPPPFS) are compositionally biased toward pro residues. A compositionally biased stretch (polar residues) spans 386–397 (ALLSSMTSSSNA). Over residues 574 to 609 (QQPTPTQASSATASSTATATLQLQQQQQQQQQQPDH) the composition is skewed to low complexity. Residues 656-669 (PQHQHGNSFTSRQD) show a composition bias toward polar residues. Phosphoserine is present on Ser676.

The protein belongs to the mastermind family. In terms of tissue distribution, expressed in fetal brain, fetal ovary and fetal testis. Expressed in adult brain, ovary, skin, testis, uterus. Highly expressed in skeletal muscle.

The protein localises to the nucleus. Functionally, transactivates the HES3 promoter independently of NOTCH proteins. HES3 is a non-canonical NOTCH target gene which lacks binding sites for RBPJ. This Homo sapiens (Human) protein is Mastermind-like domain-containing protein 1 (MAMLD1).